A 208-amino-acid chain; its full sequence is ATP-dependent Clp protease proteolytic subunit (208 aa).

S98 serves as the catalytic Nucleophile. H123 is a catalytic residue.

It belongs to the peptidase S14 family. As to quaternary structure, fourteen ClpP subunits assemble into 2 heptameric rings which stack back to back to give a disk-like structure with a central cavity, resembling the structure of eukaryotic proteasomes.

The protein localises to the cytoplasm. The catalysed reaction is Hydrolysis of proteins to small peptides in the presence of ATP and magnesium. alpha-casein is the usual test substrate. In the absence of ATP, only oligopeptides shorter than five residues are hydrolyzed (such as succinyl-Leu-Tyr-|-NHMec, and Leu-Tyr-Leu-|-Tyr-Trp, in which cleavage of the -Tyr-|-Leu- and -Tyr-|-Trp bonds also occurs).. Its function is as follows. Cleaves peptides in various proteins in a process that requires ATP hydrolysis. Has a chymotrypsin-like activity. Plays a major role in the degradation of misfolded proteins. This chain is ATP-dependent Clp protease proteolytic subunit, found in Wolbachia sp. subsp. Brugia malayi (strain TRS).